Here is a 211-residue protein sequence, read N- to C-terminus: Large ribosomal subunit protein uL3 (211 aa).

The protein belongs to the universal ribosomal protein uL3 family. In terms of assembly, part of the 50S ribosomal subunit. Forms a cluster with proteins L14 and L19.

In terms of biological role, one of the primary rRNA binding proteins, it binds directly near the 3'-end of the 23S rRNA, where it nucleates assembly of the 50S subunit. In Halothermothrix orenii (strain H 168 / OCM 544 / DSM 9562), this protein is Large ribosomal subunit protein uL3.